A 268-amino-acid polypeptide reads, in one-letter code: Mediator of RNA polymerase II transcription subunit 18 (268 aa).

The interval 91–112 (APASPVADQDAHMSGTDEKSSV) is disordered. Residues 99-112 (QDAHMSGTDEKSSV) show a composition bias toward basic and acidic residues.

The protein belongs to the Mediator complex subunit 18 family. As to quaternary structure, component of the Mediator complex.

Its subcellular location is the nucleus. Component of the Mediator complex, a coactivator involved in the regulated transcription of nearly all RNA polymerase II-dependent genes. Mediator functions as a bridge to convey information from gene-specific regulatory proteins to the basal RNA polymerase II transcription machinery. Mediator is recruited to promoters by direct interactions with regulatory proteins and serves as a scaffold for the assembly of a functional preinitiation complex with RNA polymerase II and the general transcription factors. This is Mediator of RNA polymerase II transcription subunit 18 (srb5) from Aspergillus fumigatus (strain ATCC MYA-4609 / CBS 101355 / FGSC A1100 / Af293) (Neosartorya fumigata).